A 644-amino-acid polypeptide reads, in one-letter code: Probable lysophospholipase 2 (644 aa).

An N-terminal signal peptide occupies residues 1-19; sequence MYFQSFYFLALLLATAVYG. Residues N44, N96, N141, N178, N221, N245, N253, N281, N286, N316, N319, N373, N393, N449, N501, N558, N579, and N596 are each glycosylated (N-linked (GlcNAc...) asparagine). The PLA2c domain maps to 53 to 600; sequence SCDSSEIMVN…SQYCWNGTVD (548 aa).

It belongs to the lysophospholipase family.

The protein localises to the secreted. It carries out the reaction a 1-acyl-sn-glycero-3-phosphocholine + H2O = sn-glycerol 3-phosphocholine + a fatty acid + H(+). Catalyzes the release of fatty acids from lysophospholipids. The protein is Probable lysophospholipase 2 (plb2) of Schizosaccharomyces pombe (strain 972 / ATCC 24843) (Fission yeast).